Consider the following 363-residue polypeptide: Protein RecA (363 aa).

Position 66-73 (glycine 66–threonine 73) interacts with ATP. Residues tyrosine 327–lysine 363 are disordered. Over residues isoleucine 329–lysine 363 the composition is skewed to basic and acidic residues.

Belongs to the RecA family.

It is found in the cytoplasm. Its function is as follows. Can catalyze the hydrolysis of ATP in the presence of single-stranded DNA, the ATP-dependent uptake of single-stranded DNA by duplex DNA, and the ATP-dependent hybridization of homologous single-stranded DNAs. It interacts with LexA causing its activation and leading to its autocatalytic cleavage. The polypeptide is Protein RecA (Lactobacillus acidophilus (strain ATCC 700396 / NCK56 / N2 / NCFM)).